The following is a 469-amino-acid chain: 3-isopropylmalate dehydratase large subunit (469 aa).

Positions 347, 410, and 413 each coordinate [4Fe-4S] cluster.

This sequence belongs to the aconitase/IPM isomerase family. LeuC type 1 subfamily. As to quaternary structure, heterodimer of LeuC and LeuD. [4Fe-4S] cluster is required as a cofactor.

The enzyme catalyses (2R,3S)-3-isopropylmalate = (2S)-2-isopropylmalate. Its pathway is amino-acid biosynthesis; L-leucine biosynthesis; L-leucine from 3-methyl-2-oxobutanoate: step 2/4. Its function is as follows. Catalyzes the isomerization between 2-isopropylmalate and 3-isopropylmalate, via the formation of 2-isopropylmaleate. The polypeptide is 3-isopropylmalate dehydratase large subunit (Polynucleobacter necessarius subsp. necessarius (strain STIR1)).